Consider the following 353-residue polypeptide: Ferredoxin--NADP reductase (353 aa).

Residues D33, Q41, Y46, V86, F121, D293, and T333 each coordinate FAD.

The protein belongs to the ferredoxin--NADP reductase type 2 family. Homodimer. The cofactor is FAD.

It carries out the reaction 2 reduced [2Fe-2S]-[ferredoxin] + NADP(+) + H(+) = 2 oxidized [2Fe-2S]-[ferredoxin] + NADPH. This Verminephrobacter eiseniae (strain EF01-2) protein is Ferredoxin--NADP reductase.